Reading from the N-terminus, the 382-residue chain is GTPase Obg (382 aa).

The Obg domain maps to 2–161; sequence VKFADESKIR…REIIVELNII (160 aa). The 167-residue stretch at 162-328 folds into the OBG-type G domain; it reads ADIGLVGFPN…VKKAFIRLAD (167 aa). GTP contacts are provided by residues 168 to 175, 193 to 197, 215 to 218, 282 to 285, and 309 to 311; these read GFPNAGKS, FTTKI, DIPG, TKLD, and SLY. 2 residues coordinate Mg(2+): serine 175 and threonine 195. Residues 360–382 are disordered; the sequence is EEKNDDEHFGATVSLSRKRKPKK.

It belongs to the TRAFAC class OBG-HflX-like GTPase superfamily. OBG GTPase family. As to quaternary structure, monomer. It depends on Mg(2+) as a cofactor.

It localises to the cytoplasm. An essential GTPase which binds GTP, GDP and possibly (p)ppGpp with moderate affinity, with high nucleotide exchange rates and a fairly low GTP hydrolysis rate. Plays a role in control of the cell cycle, stress response, ribosome biogenesis and in those bacteria that undergo differentiation, in morphogenesis control. This Treponema denticola (strain ATCC 35405 / DSM 14222 / CIP 103919 / JCM 8153 / KCTC 15104) protein is GTPase Obg.